The sequence spans 278 residues: Trehalose monomycolate transport factor A (278 aa).

M1 is a topological domain (periplasmic). A helical transmembrane segment spans residues 2-22; it reads VPLWFTLSALCFVGAAVLLYV. The Cytoplasmic segment spans residues 23–278; sequence DIDRRRGLGR…NGREASHFQR (256 aa). The tract at residues 200–278 is disordered; the sequence is PPVPQNGSQA…NGREASHFQR (79 aa). Positions 269 to 278 are enriched in basic and acidic residues; that stretch reads NGREASHFQR.

In terms of assembly, monomer. Interacts (via N-terminus) with MmpL3; active trehalose monomycolate (TMM) biosynthesis is not required for the complex formation. Interacts with MSMEG_5308.

It is found in the cell inner membrane. The protein localises to the cell septum. It localises to the cell tip. Required for MmpL3-dependent trehalose monomycolate (TMM) transport to the cell wall. Required for growth and cell elongation. The protein is Trehalose monomycolate transport factor A of Mycolicibacterium smegmatis (strain ATCC 700084 / mc(2)155) (Mycobacterium smegmatis).